A 674-amino-acid polypeptide reads, in one-letter code: Protein kinase C delta type (674 aa).

The region spanning 1–106 (MAPFLRISFN…KNNGKAEFWL (106 aa)) is the C2 domain. T43 and T50 each carry phosphothreonine. At Y64 the chain carries Phosphotyrosine. S130 is modified (phosphoserine). T141 carries the phosphothreonine modification. A Phosphotyrosine modification is found at Y155. A Phorbol-ester/DAG-type 1 zinc finger spans residues 158–208 (NHEFIATFFGQPTFCSVCKEFVWGLNKQGYKCRQCNAAIHKKCIDKIIGRC). At T218 the chain carries Phosphothreonine. The Phorbol-ester/DAG-type 2 zinc-finger motif lies at 230–280 (PHRFKVYNYMSPTFCDHCGSLLWGLVKQGLKCEDCGMNVHHKCREKVANLC). The residue at position 299 (S299) is a Phosphoserine; by autocatalysis. A phosphotyrosine; by SRC mark is found at Y311 and Y332. The 255-residue stretch at 347–601 (FTFQKVLGKG…TGNIRIHPFF (255 aa)) folds into the Protein kinase domain. 353–361 (LGKGSFGKV) is an ATP binding site. At Y372 the chain carries Phosphotyrosine. Position 376 (K376) interacts with ATP. T449 carries the phosphothreonine modification. Residue D471 is the Proton acceptor of the active site. A Phosphoserine modification is found at S504. At T505 the chain carries Phosphothreonine; by autocatalysis. Y565 bears the Phosphotyrosine mark. The region spanning 602–673 (KTINWSLLEK…VNPKFEQFLD (72 aa)) is the AGC-kinase C-terminal domain. Residues S643, S652, and S662 each carry the phosphoserine modification.

It belongs to the protein kinase superfamily. AGC Ser/Thr protein kinase family. PKC subfamily. In terms of assembly, interacts with PDPK1 (via N-terminal region). Interacts with RAD9A. Interacts with CDCP1. Interacts with MUC1. Interacts with VASP. Interacts with CAVIN3. Interacts with PRKD2 (via N-terminus and zing-finger domain 1 and 2) in response to oxidative stress; the interaction is independent of PRKD2 tyrosine phosphorylation. Interacts with PLSC3; interaction is enhanced by UV irradiation. Autophosphorylated and/or phosphorylated at Thr-505, within the activation loop; phosphorylation at Thr-505 is not a prerequisite for enzymatic activity. Autophosphorylated at Ser-299. Upon TNFSF10/TRAIL treatment, phosphorylated at Tyr-155; phosphorylation is required for its translocation to the endoplasmic reticulum and cleavage by caspase-3. Phosphorylated at Tyr-311, Tyr-332 and Tyr-565; phosphorylation of Tyr-311 and Tyr-565 following thrombin or zymosan stimulation potentiates its kinase activity. Phosphorylated by protein kinase PDPK1; phosphorylation is inhibited by the apoptotic C-terminal cleavage product of PKN2. Phosphorylated at Tyr-311 through a SYK and SRC mechanism downstream of C-type lectin receptors activation, promoting its activation. Post-translationally, proteolytically cleaved into a catalytic subunit and a regulatory subunit by caspase-3 during apoptosis which results in kinase activation. As to expression, isoform 1 is highly expressed in developing pro- and pre-B-cells and moderately in mature T-cells. Isoform 2 is highly expressed in testis and ovary and at a lower level in thymocytes, brain and kidney.

It localises to the cytoplasm. The protein localises to the perinuclear region. The protein resides in the nucleus. It is found in the cell membrane. Its subcellular location is the mitochondrion. It localises to the endomembrane system. It catalyses the reaction L-seryl-[protein] + ATP = O-phospho-L-seryl-[protein] + ADP + H(+). The enzyme catalyses L-threonyl-[protein] + ATP = O-phospho-L-threonyl-[protein] + ADP + H(+). The catalysed reaction is L-tyrosyl-[protein] + ATP = O-phospho-L-tyrosyl-[protein] + ADP + H(+). With respect to regulation, novel PKCs (PRKCD, PRKCE, PRKCH and PRKCQ) are calcium-insensitive, but activated by diacylglycerol (DAG) and phosphatidylserine. Three specific sites; Thr-505 (activation loop of the kinase domain), Ser-643 (turn motif) and Ser-662 (hydrophobic region), need to be phosphorylated for its full activation. Activated by caspase-3 (CASP3) cleavage during apoptosis. After cleavage, the pseudosubstrate motif in the regulatory subunit is released from the substrate recognition site of the catalytic subunit, which enables PRKCD to become constitutively activated. The catalytic subunit which displays properties of a sphingosine-dependent protein kinase is activated by D-erythro-sphingosine (Sph) or N,N-dimethyl-D-erythrosphingosine (DMS) or N,N,N-trimethyl-D-erythrosphingosine (TMS), but not by ceramide or Sph-1-P and is strongly inhibited by phosphatidylserine. Its function is as follows. Calcium-independent, phospholipid- and diacylglycerol (DAG)-dependent serine/threonine-protein kinase that plays contrasting roles in cell death and cell survival by functioning as a pro-apoptotic protein during DNA damage-induced apoptosis, but acting as an anti-apoptotic protein during cytokine receptor-initiated cell death, is involved in tumor suppression, is required for oxygen radical production by NADPH oxidase and acts as a positive or negative regulator in platelet functional responses. Negatively regulates B cell proliferation and also has an important function in self-antigen induced B cell tolerance induction. Upon DNA damage, activates the promoter of the death-promoting transcription factor BCLAF1/Btf to trigger BCLAF1-mediated p53/TP53 gene transcription and apoptosis. In response to oxidative stress, interact with and activate CHUK/IKKA in the nucleus, causing the phosphorylation of p53/TP53. In the case of ER stress or DNA damage-induced apoptosis, can form a complex with the tyrosine-protein kinase ABL1 which trigger apoptosis independently of p53/TP53. In cytosol can trigger apoptosis by activating MAPK11 or MAPK14, inhibiting AKT1 and decreasing the level of X-linked inhibitor of apoptosis protein (XIAP), whereas in nucleus induces apoptosis via the activation of MAPK8 or MAPK9. Upon ionizing radiation treatment, is required for the activation of the apoptosis regulators BAX and BAK, which trigger the mitochondrial cell death pathway. Can phosphorylate MCL1 and target it for degradation which is sufficient to trigger for BAX activation and apoptosis. Is required for the control of cell cycle progression both at G1/S and G2/M phases. Mediates phorbol 12-myristate 13-acetate (PMA)-induced inhibition of cell cycle progression at G1/S phase by up-regulating the CDK inhibitor CDKN1A/p21 and inhibiting the cyclin CCNA2 promoter activity. In response to UV irradiation can phosphorylate CDK1, which is important for the G2/M DNA damage checkpoint activation. Can protect glioma cells from the apoptosis induced by TNFSF10/TRAIL, probably by inducing increased phosphorylation and subsequent activation of AKT1. Can also act as tumor suppressor upon mitogenic stimulation with PMA or TPA. In N-formyl-methionyl-leucyl-phenylalanine (fMLP)-treated cells, is required for NCF1 (p47-phox) phosphorylation and activation of NADPH oxidase activity, and regulates TNF-elicited superoxide anion production in neutrophils, by direct phosphorylation and activation of NCF1 or indirectly through MAPK1/3 (ERK1/2) signaling pathways. Involved in antifungal immunity by mediating phosphorylation and activation of CARD9 downstream of C-type lectin receptors activation, promoting interaction between CARD9 and BCL10, followed by activation of NF-kappa-B and MAP kinase p38 pathways. May also play a role in the regulation of NADPH oxidase activity in eosinophil after stimulation with IL5, leukotriene B4 or PMA. In collagen-induced platelet aggregation, acts a negative regulator of filopodia formation and actin polymerization by interacting with and negatively regulating VASP phosphorylation. Downstream of PAR1, PAR4 and CD36/GP4 receptors, regulates differentially platelet dense granule secretion; acts as a positive regulator in PAR-mediated granule secretion, whereas it negatively regulates CD36/GP4-mediated granule release. Phosphorylates MUC1 in the C-terminal and regulates the interaction between MUC1 and beta-catenin. The catalytic subunit phosphorylates 14-3-3 proteins (YWHAB, YWHAZ and YWHAH) in a sphingosine-dependent fashion. Phosphorylates ELAVL1 in response to angiotensin-2 treatment. Phosphorylates mitochondrial phospholipid scramblase 3 (PLSCR3), resulting in increased cardiolipin expression on the mitochondrial outer membrane which facilitates apoptosis. Phosphorylates SMPD1 which induces SMPD1 secretion. In Mus musculus (Mouse), this protein is Protein kinase C delta type.